We begin with the raw amino-acid sequence, 865 residues long: Xylosyltransferase 2 (865 aa).

Residues 1–15 (MVASARVQKLVRRYK) lie on the Cytoplasmic side of the membrane. The chain crosses the membrane as a helical; Signal-anchor for type II membrane protein span at residues 16 to 36 (LAIATALAILLLQGLVVWSFS). Residues 37–865 (GLEEDEAGEK…GPVKADGRLR (829 aa)) lie on the Lumenal side of the membrane. Residues 41–157 (DEAGEKGRQR…EGAPQPTDNG (117 aa)) form a disordered region. A compositionally biased stretch (basic and acidic residues) spans 53–65 (RPLDPGEGSKDTD). Positions 73 to 82 (STGRRHGRWR) are enriched in basic residues. The N-linked (GlcNAc...) asparagine glycan is linked to Asn-122. A compositionally biased stretch (low complexity) spans 125–137 (GAAAGEALVGAAG). 4 disulfide bridges follow: Cys-162-Cys-190, Cys-206-Cys-448, Cys-467-Cys-480, and Cys-469-Cys-478. UDP-alpha-D-xylose contacts are provided by residues Val-239, Asp-267, and 296–298 (TIW). Asn-327 is a glycosylation site (N-linked (GlcNAc...) asparagine). 400 to 401 (DW) contacts UDP-alpha-D-xylose. UDP-alpha-D-xylose-binding positions include Ser-481 and 504 to 505 (RK). Intrachain disulfides connect Cys-581–Cys-833 and Cys-826–Cys-839. N-linked (GlcNAc...) asparagine glycosylation is present at Asn-683. The interval 846 to 865 (SLSPDPKSELGPVKADGRLR) is disordered.

Belongs to the glycosyltransferase 14 family. XylT subfamily. In terms of assembly, monomer. Mg(2+) serves as cofactor. Mn(2+) is required as a cofactor. In terms of processing, contains disulfide bonds.

It is found in the golgi apparatus membrane. Its subcellular location is the secreted. The catalysed reaction is UDP-alpha-D-xylose + L-seryl-[protein] = 3-O-(beta-D-xylosyl)-L-seryl-[protein] + UDP + H(+). It functions in the pathway glycan metabolism; chondroitin sulfate biosynthesis. Its pathway is glycan metabolism; heparan sulfate biosynthesis. Functionally, catalyzes the first step in the biosynthesis of chondroitin sulfate, heparan sulfate and dermatan sulfate proteoglycans, such as DCN. Transfers D-xylose from UDP-D-xylose to specific serine residues of the core protein. This is Xylosyltransferase 2 (XYLT2) from Pan troglodytes (Chimpanzee).